Here is a 207-residue protein sequence, read N- to C-terminus: Uracil phosphoribosyltransferase (207 aa).

5-phospho-alpha-D-ribose 1-diphosphate-binding positions include Arg77, Arg102, and 129–137 (DPMLATGGS). Uracil is bound by residues Ile192 and 197-199 (GDA). Asp198 lines the 5-phospho-alpha-D-ribose 1-diphosphate pocket.

The protein belongs to the UPRTase family. Mg(2+) is required as a cofactor.

The enzyme catalyses UMP + diphosphate = 5-phospho-alpha-D-ribose 1-diphosphate + uracil. The protein operates within pyrimidine metabolism; UMP biosynthesis via salvage pathway; UMP from uracil: step 1/1. Allosterically activated by GTP. Catalyzes the conversion of uracil and 5-phospho-alpha-D-ribose 1-diphosphate (PRPP) to UMP and diphosphate. This Mycoplasma mobile (strain ATCC 43663 / 163K / NCTC 11711) (Mesomycoplasma mobile) protein is Uracil phosphoribosyltransferase.